We begin with the raw amino-acid sequence, 387 residues long: Histone deacetylase 2 (387 aa).

Residues 73–382 (KVSIIYSSSY…IENLSRQGLI (310 aa)) are histone deacetylase. Catalysis depends on His-201, which acts as the Proton donor/acceptor. The Zn(2+) site is built by Asp-238, His-240, and Asp-318.

Belongs to the histone deacetylase family. HD type 3 subfamily. The cofactor is Zn(2+).

It localises to the nucleus. It catalyses the reaction N(6)-acetyl-L-lysyl-[histone] + H2O = L-lysyl-[histone] + acetate. In terms of biological role, responsible for the deacetylation of lysine residues on the N-terminal part of the core histones (H2A, H2B, H3 and H4). Histone deacetylation gives a tag for epigenetic repression and plays an important role in transcriptional regulation, cell cycle progression and developmental events. Histone deacetylases act via the formation of large multiprotein complexes. The sequence is that of Histone deacetylase 2 (HDA2) from Arabidopsis thaliana (Mouse-ear cress).